A 550-amino-acid chain; its full sequence is DNA mismatch repair protein MutL (550 aa).

The protein belongs to the DNA mismatch repair MutL/HexB family.

Functionally, this protein is involved in the repair of mismatches in DNA. It is required for dam-dependent methyl-directed DNA mismatch repair. May act as a 'molecular matchmaker', a protein that promotes the formation of a stable complex between two or more DNA-binding proteins in an ATP-dependent manner without itself being part of a final effector complex. The chain is DNA mismatch repair protein MutL from Microcystis aeruginosa (strain NIES-843 / IAM M-2473).